A 369-amino-acid polypeptide reads, in one-letter code: Iron-sulfur cluster carrier protein (369 aa).

Position 115–122 (115–122 (GKGGVGKS)) interacts with ATP.

This sequence belongs to the Mrp/NBP35 ATP-binding proteins family. Homodimer. Holo-ApbC forms a mixture of homodimers and homotetramers.

Binds and transfers iron-sulfur (Fe-S) clusters to target apoproteins. Can hydrolyze ATP. Both activities are required for function in vivo, but the ability to hydrolyze ATP is not necessary for Fe-S cluster transfer. This Salmonella typhimurium (strain LT2 / SGSC1412 / ATCC 700720) protein is Iron-sulfur cluster carrier protein.